Reading from the N-terminus, the 165-residue chain is Large ribosomal subunit protein uL10 (165 aa).

This sequence belongs to the universal ribosomal protein uL10 family. As to quaternary structure, part of the ribosomal stalk of the 50S ribosomal subunit. The N-terminus interacts with L11 and the large rRNA to form the base of the stalk. The C-terminus forms an elongated spine to which L12 dimers bind in a sequential fashion forming a multimeric L10(L12)X complex.

Functionally, forms part of the ribosomal stalk, playing a central role in the interaction of the ribosome with GTP-bound translation factors. The chain is Large ribosomal subunit protein uL10 from Mycoplasmopsis synoviae (strain 53) (Mycoplasma synoviae).